A 353-amino-acid chain; its full sequence is Probable peptidoglycan glycosyltransferase FtsW (353 aa).

The next 8 membrane-spanning stretches (helical) occupy residues 26-46 (IFYFFLIFLLSFILLRIPMSF), 53-73 (LILIISIFLLTIVLLIGKSVH), 115-135 (FWGFLKPITIIIIQSVLLLAE), 137-157 (DLGTVIVLFLTTLSVLFLSGV), 162-182 (FFIIIFFVTLIITALVLFEPY), 242-262 (IIGEELGYIGCFLILLMIFFI), 288-308 (IGLWFSFQTLINIGAVTGILP), and 314-334 (LPLISYGGSSLIVNLMAICIL).

This sequence belongs to the SEDS family. FtsW subfamily.

Its subcellular location is the cell inner membrane. The catalysed reaction is [GlcNAc-(1-&gt;4)-Mur2Ac(oyl-L-Ala-gamma-D-Glu-L-Lys-D-Ala-D-Ala)](n)-di-trans,octa-cis-undecaprenyl diphosphate + beta-D-GlcNAc-(1-&gt;4)-Mur2Ac(oyl-L-Ala-gamma-D-Glu-L-Lys-D-Ala-D-Ala)-di-trans,octa-cis-undecaprenyl diphosphate = [GlcNAc-(1-&gt;4)-Mur2Ac(oyl-L-Ala-gamma-D-Glu-L-Lys-D-Ala-D-Ala)](n+1)-di-trans,octa-cis-undecaprenyl diphosphate + di-trans,octa-cis-undecaprenyl diphosphate + H(+). It participates in cell wall biogenesis; peptidoglycan biosynthesis. Peptidoglycan polymerase that is essential for cell division. The chain is Probable peptidoglycan glycosyltransferase FtsW from Buchnera aphidicola subsp. Schizaphis graminum (strain Sg).